A 161-amino-acid polypeptide reads, in one-letter code: SsrA-binding protein (161 aa).

A compositionally biased stretch (basic and acidic residues) spans 139–153 (RESIKRKEENRELDR). The interval 139 to 161 (RESIKRKEENRELDRLRKRRRQE) is disordered.

The protein belongs to the SmpB family.

The protein resides in the cytoplasm. Its function is as follows. Required for rescue of stalled ribosomes mediated by trans-translation. Binds to transfer-messenger RNA (tmRNA), required for stable association of tmRNA with ribosomes. tmRNA and SmpB together mimic tRNA shape, replacing the anticodon stem-loop with SmpB. tmRNA is encoded by the ssrA gene; the 2 termini fold to resemble tRNA(Ala) and it encodes a 'tag peptide', a short internal open reading frame. During trans-translation Ala-aminoacylated tmRNA acts like a tRNA, entering the A-site of stalled ribosomes, displacing the stalled mRNA. The ribosome then switches to translate the ORF on the tmRNA; the nascent peptide is terminated with the 'tag peptide' encoded by the tmRNA and targeted for degradation. The ribosome is freed to recommence translation, which seems to be the essential function of trans-translation. In Syntrophobacter fumaroxidans (strain DSM 10017 / MPOB), this protein is SsrA-binding protein.